Here is a 340-residue protein sequence, read N- to C-terminus: GTP 3',8-cyclase (340 aa).

The Radical SAM core domain occupies 8-230; that stretch reads KLGRPIRDLR…EQHFEIDPVE (223 aa). GTP is bound at residue Arg17. Positions 24 and 28 each coordinate [4Fe-4S] cluster. Tyr30 contacts S-adenosyl-L-methionine. A [4Fe-4S] cluster-binding site is contributed by Cys31. A GTP-binding site is contributed by Arg71. Gly75 lines the S-adenosyl-L-methionine pocket. Position 102 (Thr102) interacts with GTP. An S-adenosyl-L-methionine-binding site is contributed by Ser126. Lys163 serves as a coordination point for GTP. Met197 contacts S-adenosyl-L-methionine. [4Fe-4S] cluster contacts are provided by Cys261 and Cys264. 266 to 268 contributes to the GTP binding site; that stretch reads RAR. Cys278 is a [4Fe-4S] cluster binding site.

This sequence belongs to the radical SAM superfamily. MoaA family. As to quaternary structure, monomer and homodimer. [4Fe-4S] cluster is required as a cofactor.

The catalysed reaction is GTP + AH2 + S-adenosyl-L-methionine = (8S)-3',8-cyclo-7,8-dihydroguanosine 5'-triphosphate + 5'-deoxyadenosine + L-methionine + A + H(+). Its pathway is cofactor biosynthesis; molybdopterin biosynthesis. Its function is as follows. Catalyzes the cyclization of GTP to (8S)-3',8-cyclo-7,8-dihydroguanosine 5'-triphosphate. The chain is GTP 3',8-cyclase from Staphylococcus aureus (strain bovine RF122 / ET3-1).